We begin with the raw amino-acid sequence, 371 residues long: Macrolide export protein MacA (371 aa).

Over 1-10 the chain is Cytoplasmic; that stretch reads MKKRKTVKKR. A helical membrane pass occupies residues 11–31; it reads YVIALVIVIAGLITLWRILNA. Residues 32 to 371 are Periplasmic-facing; sequence PVPTYQTLIV…IGEAKPGAAQ (340 aa). A coiled-coil region spans residues 92-137; that stretch reads IDPEQAENQIKEVEATLMELRAQRQQAEAELKLARVTYSRQQRLAQ.

It belongs to the membrane fusion protein (MFP) (TC 8.A.1) family. Homohexamer. Part of the tripartite efflux system MacAB-TolC, which is composed of an inner membrane transporter, MacB, a periplasmic membrane fusion protein, MacA, and an outer membrane component, TolC. The complex forms a large protein conduit and can translocate molecules across both the inner and outer membranes. MacA interacts with MacB and TolC.

Its subcellular location is the cell inner membrane. In terms of biological role, part of the tripartite efflux system MacAB-TolC. MacA stimulates the ATPase activity of MacB by promoting the closed ATP-bound state of MacB, increases the capacity of MacB to bind macrolides such as erythromycin, and provides a physical link between MacB and TolC. Confers resistance against macrolides. This chain is Macrolide export protein MacA (macA), found in Escherichia coli O157:H7.